The primary structure comprises 182 residues: Fimbrial subunit type 1 (182 aa).

A signal peptide spans Met1–Ala23. The cysteines at positions 44 and 84 are disulfide-linked.

Belongs to the fimbrial protein family.

The protein resides in the fimbrium. The polypeptide is Fimbrial subunit type 1 (Klebsiella pneumoniae).